Here is a 447-residue protein sequence, read N- to C-terminus: Methylenetetrahydrofolate--tRNA-(uracil-5-)-methyltransferase TrmFO (447 aa).

Position 10–15 (10–15 (GAGLAG)) interacts with FAD.

This sequence belongs to the MnmG family. TrmFO subfamily. FAD serves as cofactor.

The protein localises to the cytoplasm. It catalyses the reaction uridine(54) in tRNA + (6R)-5,10-methylene-5,6,7,8-tetrahydrofolate + NADH + H(+) = 5-methyluridine(54) in tRNA + (6S)-5,6,7,8-tetrahydrofolate + NAD(+). The catalysed reaction is uridine(54) in tRNA + (6R)-5,10-methylene-5,6,7,8-tetrahydrofolate + NADPH + H(+) = 5-methyluridine(54) in tRNA + (6S)-5,6,7,8-tetrahydrofolate + NADP(+). Its function is as follows. Catalyzes the folate-dependent formation of 5-methyl-uridine at position 54 (M-5-U54) in all tRNAs. In Symbiobacterium thermophilum (strain DSM 24528 / JCM 14929 / IAM 14863 / T), this protein is Methylenetetrahydrofolate--tRNA-(uracil-5-)-methyltransferase TrmFO.